Reading from the N-terminus, the 63-residue chain is Large ribosomal subunit protein uL30 (63 aa).

It belongs to the universal ribosomal protein uL30 family. As to quaternary structure, part of the 50S ribosomal subunit.

In Rickettsia canadensis (strain McKiel), this protein is Large ribosomal subunit protein uL30.